Reading from the N-terminus, the 151-residue chain is Pollen allergen Sal k 5.0101 (151 aa).

Cystine bridges form between Cys17-Cys88, Cys20-Cys132, and Cys41-Cys76. Asn43 carries N-linked (GlcNAc...) asparagine glycosylation.

Belongs to the Ole e I family. N-glycosylated. Contains fucose monosaccharides in the glycan structure. As to expression, expressed in pollen (at protein level).

The protein localises to the secreted. This chain is Pollen allergen Sal k 5.0101, found in Kali turgidum (Prickly saltwort).